The primary structure comprises 432 residues: Glutamate-1-semialdehyde 2,1-aminomutase (432 aa).

Lysine 269 carries the N6-(pyridoxal phosphate)lysine modification.

Belongs to the class-III pyridoxal-phosphate-dependent aminotransferase family. HemL subfamily. Homodimer. Pyridoxal 5'-phosphate serves as cofactor.

Its subcellular location is the cytoplasm. The enzyme catalyses (S)-4-amino-5-oxopentanoate = 5-aminolevulinate. It participates in porphyrin-containing compound metabolism; protoporphyrin-IX biosynthesis; 5-aminolevulinate from L-glutamyl-tRNA(Glu): step 2/2. The chain is Glutamate-1-semialdehyde 2,1-aminomutase from Desulforudis audaxviator (strain MP104C).